We begin with the raw amino-acid sequence, 50 residues long: Small nuclear ribonucleoprotein Sm D2 (50 aa).

The segment at 1–36 is disordered; sequence MSLLNKPKSEMTPEELQKREEEEFNTGPLSVXTQSX. Serine 2 is subject to N-acetylserine. Glycyl lysine isopeptide (Lys-Gly) (interchain with G-Cter in SUMO2) cross-links involve residues lysine 6 and lysine 8. Basic and acidic residues predominate over residues 7-21; the sequence is PKSEMTPEELQKREE. Serine 9 is subject to Phosphoserine. Position 12 is a phosphothreonine (threonine 12).

This sequence belongs to the snRNP core protein family. As to quaternary structure, core component of the spliceosomal U1, U2, U4 and U5 small nuclear ribonucleoproteins (snRNPs), the building blocks of the spliceosome. Most spliceosomal snRNPs contain a common set of Sm proteins, SNRPB, SNRPD1, SNRPD2, SNRPD3, SNRPE, SNRPF and SNRPG that assemble in a heptameric protein ring on the Sm site of the small nuclear RNA to form the core snRNP. Component of the U1 snRNP. The U1 snRNP is composed of the U1 snRNA and the 7 core Sm proteins SNRPB, SNRPD1, SNRPD2, SNRPD3, SNRPE, SNRPF and SNRPG, and at least three U1 snRNP-specific proteins SNRNP70/U1-70K, SNRPA/U1-A and SNRPC/U1-C. Component of the U4/U6-U5 tri-snRNP complex composed of the U4, U6 and U5 snRNAs and at least PRPF3, PRPF4, PRPF6, PRPF8, PRPF31, SNRNP200, TXNL4A, SNRNP40, SNRPB, SNRPD1, SNRPD2, SNRPD3, SNRPE, SNRPF, SNRPG, DDX23, CD2BP2, PPIH, SNU13, EFTUD2, SART1 and USP39, plus LSM2, LSM3, LSM4, LSM5, LSM6, LSM7 and LSM8. Component of the minor spliceosome, which splices U12-type introns. Part of the SMN-Sm complex that contains SMN1, GEMIN2/SIP1, DDX20/GEMIN3, GEMIN4, GEMIN5, GEMIN6, GEMIN7, GEMIN8, STRAP/UNRIP and the Sm proteins SNRPB, SNRPD1, SNRPD2, SNRPD3, SNRPE, SNRPF and SNRPG; catalyzes core snRNPs assembly. Forms a 6S pICln-Sm complex composed of CLNS1A/pICln, SNRPD1, SNRPD2, SNRPE, SNRPF and SNRPG; ring-like structure where CLNS1A/pICln mimics additional Sm proteins and which is unable to assemble into the core snRNP. Interacts with SMN1; the interaction is direct. Interacts with GEMIN2; the interaction is direct. Interacts with SNRPD1; the interaction is direct. Interacts with SNRPF; the interaction is direct.

The protein resides in the cytoplasm. Its subcellular location is the cytosol. It localises to the nucleus. Functionally, plays a role in pre-mRNA splicing as a core component of the spliceosomal U1, U2, U4 and U5 small nuclear ribonucleoproteins (snRNPs), the building blocks of the spliceosome. Component of both the pre-catalytic spliceosome B complex and activated spliceosome C complexes. As a component of the minor spliceosome, involved in the splicing of U12-type introns in pre-mRNAs. In Sus scrofa (Pig), this protein is Small nuclear ribonucleoprotein Sm D2 (SNRPD2).